Reading from the N-terminus, the 693-residue chain is TBC1 domain family member 12 (693 aa).

At M1 the chain carries N-acetylmethionine. 3 disordered regions span residues 1 to 57, 91 to 120, and 156 to 229; these read MMGP…EAPP, RGSG…RRTC, and AAGD…TTVR. A compositionally biased stretch (low complexity) spans 40–49; the sequence is GAVAAEPPGE. Residues 106–115 are compositionally biased toward basic and acidic residues; that stretch reads QDRRGPEEAR. Residues S202 and S233 each carry the phosphoserine modification. The Rab-GAP TBC domain occupies 402–610; the sequence is GLPPSVRGKV…RVWDVFCRDG (209 aa).

Interacts with RAB11A; this interaction recruits TBC1D12 to RAB11A-positive recycling endosomes.

Its subcellular location is the endosome. RAB11A-binding protein that plays a role in neurite outgrowth. The protein is TBC1 domain family member 12 (Tbc1d12) of Rattus norvegicus (Rat).